Here is a 617-residue protein sequence, read N- to C-terminus: Protein 4.1 (617 aa).

The FERM domain maps to 1–282 (MHCKVSLLDD…EHHTFFRLTS (282 aa)). Residue tyrosine 13 is modified to Phosphotyrosine. Threonine 169 bears the Phosphothreonine mark. The segment at 308 to 401 (TRQASALIDR…AEPEPSEAWK (94 aa)) is disordered. Phosphoserine is present on residues serine 312, serine 331, and serine 333. The segment covering 348–361 (RPTSAPAIAPSPAA) has biased composition (low complexity). Over residues 387-396 (APPEDAEPEP) the composition is skewed to acidic residues. The spectrin--actin-binding stretch occupies residues 401–466 (KKKRERLDGE…WDKRLSTHSP (66 aa)). Tyrosine 413 bears the Phosphotyrosine; by EGFR mark. 4 positions are modified to phosphoserine: serine 417, serine 427, serine 437, and serine 462. A Phosphoserine; by CDK1 modification is found at serine 465. The C-terminal (CTD) stretch occupies residues 467–617 (FRTLNINGQI…VHQETEISEE (151 aa)). Phosphothreonine occurs at positions 489 and 612.

In terms of assembly, binds with a high affinity to glycophorin and with lower affinity to band III protein. Associates with the nuclear mitotic apparatus. Binds calmodulin, CPAP and DLG1. Also found to associate with contractile apparatus and tight junctions. Interacts with NUMA1; this interaction is negatively regulated by CDK1 during metaphase and promotes anaphase-specific localization of NUMA1 in symmetrically dividing cells. Interacts with ATP2B1; regulates small intestinal calcium absorption through regulation of membrane expression of ATP2B1. Post-translationally, phosphorylated at multiple sites by different protein kinases and each phosphorylation event selectively modulates the protein's functions. Phosphorylation on Tyr-413 reduces the ability of 4.1 to promote the assembly of the spectrin/actin/4.1 ternary complex.

The protein resides in the nucleus. It localises to the cytoplasm. The protein localises to the cytoskeleton. It is found in the cell cortex. Its function is as follows. Protein 4.1 is a major structural element of the erythrocyte membrane skeleton. It plays a key role in regulating membrane physical properties of mechanical stability and deformability by stabilizing spectrin-actin interaction. Recruits DLG1 to membranes. Required for dynein-dynactin complex and NUMA1 recruitment at the mitotic cell cortex during anaphase. The chain is Protein 4.1 from Bos taurus (Bovine).